The following is a 325-amino-acid chain: Cytochrome c1, heme protein, mitochondrial (325 aa).

The N-terminal 84 residues, 1–84 (MAAAAATLRG…AVALHSAVSA (84 aa)), are a transit peptide targeting the mitochondrion. Topologically, residues 85-281 (SDLELHPPSY…TFLRWAAEPE (197 aa)) are mitochondrial intermembrane. The Cytochrome c domain maps to 108–209 (TSIRRGFQVY…IVRARHGGED (102 aa)). Heme c is bound by residues Cys121, Cys124, His125, and Met244. Residues 282–315 (HDHRKRMGLKMLLMMGLLLPLVYAMKRHKWSVLK) form a helical membrane-spanning segment. At 316–325 (SRKLAYRPPK) the chain is on the mitochondrial matrix side.

The protein belongs to the cytochrome c family. In terms of assembly, component of the ubiquinol-cytochrome c oxidoreductase (cytochrome b-c1 complex, complex III, CIII), a multisubunit enzyme composed of 11 subunits. The complex is composed of 3 respiratory subunits cytochrome b, cytochrome c1 and Rieske protein UQCRFS1, 2 core protein subunits UQCRC1/QCR1 and UQCRC2/QCR2, and 6 low-molecular weight protein subunits UQCRH/QCR6, UQCRB/QCR7, UQCRQ/QCR8, UQCR10/QCR9, UQCR11/QCR10 and subunit 9, the cleavage product of Rieske protein UQCRFS1. The complex exists as an obligatory dimer and forms supercomplexes (SCs) in the inner mitochondrial membrane with NADH-ubiquinone oxidoreductase (complex I, CI) and cytochrome c oxidase (complex IV, CIV), resulting in different assemblies (supercomplex SCI(1)III(2)IV(1) and megacomplex MCI(2)III(2)IV(2)). Interacts with FLVCR2; this interaction occurs in the absence of heme and is disrupted upon heme binding. Requires heme c as cofactor.

Its subcellular location is the mitochondrion inner membrane. It catalyses the reaction a quinol + 2 Fe(III)-[cytochrome c](out) = a quinone + 2 Fe(II)-[cytochrome c](out) + 2 H(+)(out). Component of the ubiquinol-cytochrome c oxidoreductase, a multisubunit transmembrane complex that is part of the mitochondrial electron transport chain which drives oxidative phosphorylation. The respiratory chain contains 3 multisubunit complexes succinate dehydrogenase (complex II, CII), ubiquinol-cytochrome c oxidoreductase (cytochrome b-c1 complex, complex III, CIII) and cytochrome c oxidase (complex IV, CIV), that cooperate to transfer electrons derived from NADH and succinate to molecular oxygen, creating an electrochemical gradient over the inner membrane that drives transmembrane transport and the ATP synthase. The cytochrome b-c1 complex catalyzes electron transfer from ubiquinol to cytochrome c, linking this redox reaction to translocation of protons across the mitochondrial inner membrane, with protons being carried across the membrane as hydrogens on the quinol. In the process called Q cycle, 2 protons are consumed from the matrix, 4 protons are released into the intermembrane space and 2 electrons are passed to cytochrome c. Cytochrome c1 is a catalytic core subunit containing a c-type heme. It transfers electrons from the [2Fe-2S] iron-sulfur cluster of the Rieske protein to cytochrome c. The protein is Cytochrome c1, heme protein, mitochondrial (CYC1) of Bos taurus (Bovine).